Consider the following 674-residue polypeptide: uncharacterized protein (674 aa).

Residues 1–24 (MKTLKALKIFIIVYISSVSLESFA) form the signal peptide. 2 helical membrane passes run 226 to 246 (IIGA…ALNK) and 254 to 274 (ITLF…LEPL). The segment at 363-384 (GNGPGGNNKPIPNFDPDSKKDR) is disordered. Helical transmembrane passes span 409–429 (IIIL…LLYF), 436–456 (CMIT…MVLF), 469–489 (VCIS…LLIT), and 562–582 (VVSI…FYYF). The interval 624 to 674 (SSVHAQGKSPVEDKPDIGSKRKDGVQQGEDSENSSGGELADLASGSGGGKL) is disordered. A compositionally biased stretch (basic and acidic residues) spans 633–647 (PVEDKPDIGSKRKDG).

The protein belongs to the TrbL/VirB6 family.

The protein localises to the cell membrane. This is an uncharacterized protein from Rickettsia typhi (strain ATCC VR-144 / Wilmington).